Here is a 635-residue protein sequence, read N- to C-terminus: Very-long-chain aldehyde decarbonylase GL1-6 (635 aa).

Helical transmembrane passes span 46–66 (LLNF…QLWI), 100–120 (IILT…AQVA), 127–147 (GMVV…YWLH), and 183–203 (VVYF…GTVS). The region spanning 139-273 (VEFLYYWLHR…MPVYDYIYGT (135 aa)) is the Fatty acid hydroxylase domain.

Belongs to the sterol desaturase family. In terms of assembly, homodimer.

Its subcellular location is the endoplasmic reticulum membrane. The enzyme catalyses a long-chain fatty aldehyde + 2 NADPH + O2 + H(+) = a long-chain alkane + formate + 2 NADP(+) + H2O. Its function is as follows. Aldehyde decarbonylase involved in the conversion of aldehydes to alkanes. Core component of a very-long-chain alkane synthesis complex. The polypeptide is Very-long-chain aldehyde decarbonylase GL1-6 (Oryza sativa subsp. indica (Rice)).